We begin with the raw amino-acid sequence, 390 residues long: MAIRRVMHVDLDAFFVSVEQSLRPELKSKPVIVGGKPERRGVVAAASYEARKFGIHSGMPLLSAKHLCPQAVFIEGNHRLYREYSEKFMQILSDFSPFLEPMGLDEAYLEVTGFESLHGSIGEMALKIRRRITAELSINASIGIANSKVVAKIATERAKPNGQCEVPAGEEAAFLAPLDISIMPGIGKKTEYHLKSLGINTLGRLAGIPATFLKIHLGTYAPYLLNAAAGIDNRPVEMPAEAKSISRETTFETDTRNHTFLEAKLGYLSEKIAATLRKRGKQARVVQIKIRFADFTTLTRQKHLNHPCSGNQEIFQTALKLMNGILDSDRRSVRLLGVGISDFCGPEKQLEIDPARARLEKLDASLDKIRQKYGFGSVQTGRTYKLKDLF.

The UmuC domain occupies 6–187 (VMHVDLDAFF…LDISIMPGIG (182 aa)). Residues D10 and D105 each contribute to the Mg(2+) site. E106 is an active-site residue.

Belongs to the DNA polymerase type-Y family. In terms of assembly, monomer. Mg(2+) is required as a cofactor.

Its subcellular location is the cytoplasm. It carries out the reaction DNA(n) + a 2'-deoxyribonucleoside 5'-triphosphate = DNA(n+1) + diphosphate. Functionally, poorly processive, error-prone DNA polymerase involved in untargeted mutagenesis. Copies undamaged DNA at stalled replication forks, which arise in vivo from mismatched or misaligned primer ends. These misaligned primers can be extended by PolIV. Exhibits no 3'-5' exonuclease (proofreading) activity. May be involved in translesional synthesis, in conjunction with the beta clamp from PolIII. The chain is DNA polymerase IV from Dehalococcoides mccartyi (strain ATCC BAA-2266 / KCTC 15142 / 195) (Dehalococcoides ethenogenes (strain 195)).